The primary structure comprises 247 residues: tRNA pseudouridine synthase A (247 aa).

The Nucleophile role is filled by Asp52. Tyr113 contacts substrate.

Belongs to the tRNA pseudouridine synthase TruA family. In terms of assembly, homodimer.

The enzyme catalyses uridine(38/39/40) in tRNA = pseudouridine(38/39/40) in tRNA. Formation of pseudouridine at positions 38, 39 and 40 in the anticodon stem and loop of transfer RNAs. This is tRNA pseudouridine synthase A from Sinorhizobium fredii (strain NBRC 101917 / NGR234).